Reading from the N-terminus, the 280-residue chain is Purine nucleoside phosphorylase (280 aa).

Phosphate-binding positions include Ser15 and 55–56 (RH). Met194 lines the substrate pocket. Thr195 provides a ligand contact to phosphate. 218 to 220 (DLD) serves as a coordination point for substrate.

It belongs to the PNP/MTAP phosphorylase family. MTAP subfamily. Homohexamer. Dimer of a homotrimer.

The enzyme catalyses a purine D-ribonucleoside + phosphate = a purine nucleobase + alpha-D-ribose 1-phosphate. It functions in the pathway purine metabolism; purine nucleoside salvage. Functionally, purine nucleoside phosphorylase involved in purine salvage. The protein is Purine nucleoside phosphorylase of Streptomyces coelicolor (strain ATCC BAA-471 / A3(2) / M145).